Here is a 617-residue protein sequence, read N- to C-terminus: Dihydroxy-acid dehydratase (617 aa).

Aspartate 81 is a Mg(2+) binding site. Cysteine 122 is a binding site for [2Fe-2S] cluster. Residues aspartate 123 and lysine 124 each contribute to the Mg(2+) site. Lysine 124 is modified (N6-carboxylysine). Cysteine 195 serves as a coordination point for [2Fe-2S] cluster. Glutamate 491 contributes to the Mg(2+) binding site. Serine 517 functions as the Proton acceptor in the catalytic mechanism.

It belongs to the IlvD/Edd family. Homodimer. The cofactor is [2Fe-2S] cluster. Mg(2+) serves as cofactor.

The enzyme catalyses (2R)-2,3-dihydroxy-3-methylbutanoate = 3-methyl-2-oxobutanoate + H2O. It catalyses the reaction (2R,3R)-2,3-dihydroxy-3-methylpentanoate = (S)-3-methyl-2-oxopentanoate + H2O. It functions in the pathway amino-acid biosynthesis; L-isoleucine biosynthesis; L-isoleucine from 2-oxobutanoate: step 3/4. Its pathway is amino-acid biosynthesis; L-valine biosynthesis; L-valine from pyruvate: step 3/4. Its function is as follows. Functions in the biosynthesis of branched-chain amino acids. Catalyzes the dehydration of (2R,3R)-2,3-dihydroxy-3-methylpentanoate (2,3-dihydroxy-3-methylvalerate) into 2-oxo-3-methylpentanoate (2-oxo-3-methylvalerate) and of (2R)-2,3-dihydroxy-3-methylbutanoate (2,3-dihydroxyisovalerate) into 2-oxo-3-methylbutanoate (2-oxoisovalerate), the penultimate precursor to L-isoleucine and L-valine, respectively. The protein is Dihydroxy-acid dehydratase of Buchnera aphidicola subsp. Diuraphis noxia.